The primary structure comprises 179 residues: Large ribosomal subunit protein uL6 (179 aa).

Belongs to the universal ribosomal protein uL6 family. Part of the 50S ribosomal subunit.

In terms of biological role, this protein binds to the 23S rRNA, and is important in its secondary structure. It is located near the subunit interface in the base of the L7/L12 stalk, and near the tRNA binding site of the peptidyltransferase center. The protein is Large ribosomal subunit protein uL6 of Beutenbergia cavernae (strain ATCC BAA-8 / DSM 12333 / CCUG 43141 / JCM 11478 / NBRC 16432 / NCIMB 13614 / HKI 0122).